A 198-amino-acid chain; its full sequence is Thioredoxin reductase-like selenoprotein T homolog CG3887 (198 aa).

The signal sequence occupies residues 1–25; it reads MERLTGRNVALLVLCLCAGYALVFA. Cysteine 49 and cysteine 52 form a disulfide bridge.

The protein belongs to the SelWTH family. SELT subfamily.

It catalyses the reaction [thioredoxin]-dithiol + NADP(+) = [thioredoxin]-disulfide + NADPH + H(+). Its function is as follows. Probably has thioredoxin reductase-like oxidoreductase activity. The sequence is that of Thioredoxin reductase-like selenoprotein T homolog CG3887 from Drosophila melanogaster (Fruit fly).